A 436-amino-acid chain; its full sequence is GTPase Der (436 aa).

EngA-type G domains are found at residues 4–167 (PTVA…PVEE) and 175–351 (IRFS…ESQN). Residues 10–17 (GRPNVGKS), 57–61 (DTGGI), 119–122 (NKVD), 181–188 (GRPNVGKS), 229–233 (DTAGM), and 294–297 (NKWD) each bind GTP. Positions 352-436 (KRIPSAVLND…PIHLIARKRK (85 aa)) constitute a KH-like domain.

Belongs to the TRAFAC class TrmE-Era-EngA-EngB-Septin-like GTPase superfamily. EngA (Der) GTPase family. In terms of assembly, associates with the 50S ribosomal subunit.

Its function is as follows. GTPase that plays an essential role in the late steps of ribosome biogenesis. In Streptococcus pyogenes serotype M1, this protein is GTPase Der.